The primary structure comprises 1318 residues: Major tegument protein (1318 aa).

It belongs to the herpesviridae MTP family. Interacts with host DAXX; this interaction disrupts the chromatin remodeling complex ATRX:DAXX and thus allows viral transcription. Interacts with host SMC6; this interaction targets SMC5-SMC6 complex for proteasomal degradation.

It is found in the virion tegument. The protein resides in the host nucleus. In terms of biological role, tegument protein that plays a role in the inhibition of host intrinsic defenses to promote viral early gene activation. Interacts with host DAXX and thereby disrupts the complex between DAXX and ATRX. Suppresses the DAXX-ATRX dependent deposition of histone H3.3 on viral chromatin allowing viral transcription. Targets also host SMC5/6 for proteasomal degradation in a CUL7 and calpain-dependent manner to support nuclear membrane-less replication compartment formation and lytic virus replication. This Epstein-Barr virus (strain GD1) (HHV-4) protein is Major tegument protein.